A 115-amino-acid chain; its full sequence is Large ribosomal subunit protein bL20 (115 aa).

This sequence belongs to the bacterial ribosomal protein bL20 family.

In terms of biological role, binds directly to 23S ribosomal RNA and is necessary for the in vitro assembly process of the 50S ribosomal subunit. It is not involved in the protein synthesizing functions of that subunit. The protein is Large ribosomal subunit protein bL20 of Chlorobium phaeobacteroides (strain DSM 266 / SMG 266 / 2430).